Consider the following 424-residue polypeptide: Dehydrogenase FUM7 (424 aa).

The protein belongs to the iron-containing alcohol dehydrogenase family. Fe cation serves as cofactor.

It participates in mycotoxin biosynthesis. Its function is as follows. Dehydrogenase; part of the gene cluster that mediates the biosynthesis of fumonisins B1 (FB1), B2 (FB2), B3 (FB3), and B4 (FB4), which are carcinogenic mycotoxins. Within the pathway, FUM7 is involved the addition of the tricarballylic moieties to the carbon backbone. FUM7 dehydrogenase removes the C-3 hydroxyl of citrate to form tricarballylic acid either before or after the CoA activation by the FUM10 acyl-CoA synthetase and FUM14 catalyzed esterification of CoA-activated tricarballylic acid to the C-14 and C-15 hydroxyls of the fumonisin backbone. The biosynthesis starts with the FUM1-catalyzed carbon chain assembly from one molecule of acetyl-CoA, eight molecules of malonyl-CoA, and two molecules of methionine (in S-adenosyl form). The C18 polyketide chain is released from the enzyme by a nucleophilic attack of a carbanion, which is derived from R-carbon of alanine by decarboxylation, on the carbonyl carbon of polyketide acyl chain. This step is catalyzed by the pyridoxal 5'-phosphate-dependent aminoacyl transferase FUM8. The resultant 3-keto intermediate is then stereospecifically reduced to a 3-hydroxyl product by reductase FUM13. Subsequent oxidations at C-10 by the cytochrome P450 monooxygenase FUM2, C-14 and C-15 by FUM6, FUM12 or FUM15, tricarballylic esterification of the hydroxyl groups on C-14 and C-15 by acyltransferase FUM14, and C-5 hydroxylation by 2-keto-glutarate-dependent dioxygenase FUM3 furnish the biosynthesis of fumonisins. The tricarballylic moieties are most likely derived from the citric acid cycle, and their addition to the carbon backbone may involve FUM7, FUM10, FUM11 and FUM14. The sequence is that of Dehydrogenase FUM7 from Gibberella moniliformis (strain M3125 / FGSC 7600) (Maize ear and stalk rot fungus).